The following is a 436-amino-acid chain: Chromosomal replication initiator protein DnaA (436 aa).

The tract at residues 1 to 69 (MLADEILELL…AYLYEVKTGK (69 aa)) is domain I, interacts with DnaA modulators. The segment at 69–99 (KKPEVEITSQTKLKNIKQNQVNVKQIKAQSS) is domain II. Residues 100–314 (ILNPGYTFEN…GAIINLNAYA (215 aa)) form a domain III, AAA+ region region. The ATP site is built by G144, G146, K147, and T148. The segment at 315-436 (SLMRVEITLE…EIKNKILTKG (122 aa)) is domain IV, binds dsDNA.

This sequence belongs to the DnaA family. In terms of assembly, oligomerizes as a right-handed, spiral filament on DNA at oriC.

It is found in the cytoplasm. Plays an essential role in the initiation and regulation of chromosomal replication. ATP-DnaA binds to the origin of replication (oriC) to initiate formation of the DNA replication initiation complex once per cell cycle. Binds the DnaA box (a 9 base pair repeat at the origin) and separates the double-stranded (ds)DNA. Forms a right-handed helical filament on oriC DNA; dsDNA binds to the exterior of the filament while single-stranded (ss)DNA is stabiized in the filament's interior. The ATP-DnaA-oriC complex binds and stabilizes one strand of the AT-rich DNA unwinding element (DUE), permitting loading of DNA polymerase. After initiation quickly degrades to an ADP-DnaA complex that is not apt for DNA replication. Binds acidic phospholipids. This Campylobacter concisus (strain 13826) protein is Chromosomal replication initiator protein DnaA.